Consider the following 267-residue polypeptide: Triosephosphate isomerase (267 aa).

12–14 (NWK) lines the substrate pocket. His104 (electrophile) is an active-site residue. The active-site Proton acceptor is Glu176. Residues Gly182, Ser222, and 243-244 (GG) each bind substrate.

Belongs to the triosephosphate isomerase family. As to quaternary structure, homodimer.

It localises to the cytoplasm. It carries out the reaction D-glyceraldehyde 3-phosphate = dihydroxyacetone phosphate. Its pathway is carbohydrate biosynthesis; gluconeogenesis. The protein operates within carbohydrate degradation; glycolysis; D-glyceraldehyde 3-phosphate from glycerone phosphate: step 1/1. In terms of biological role, involved in the gluconeogenesis. Catalyzes stereospecifically the conversion of dihydroxyacetone phosphate (DHAP) to D-glyceraldehyde-3-phosphate (G3P). This Bifidobacterium longum (strain DJO10A) protein is Triosephosphate isomerase.